We begin with the raw amino-acid sequence, 1406 residues long: Protein crumbs homolog 1 (1406 aa).

The signal sequence occupies residues 1–25 (MALKNINYLLIFYLSFSLLIYIKNS). At 26–1347 (FCNKNNTRCL…DDLISDIFTT (1322 aa)) the chain is on the extracellular side. 3 N-linked (GlcNAc...) asparagine glycosylation sites follow: Asn-30, Asn-41, and Asn-42. EGF-like domains follow at residues 30–68 (NNTRCLSNSCQNNSTCKDFSKDNDCSCSDTANNLDKDCD), 70–108 (MKDPCFSNPCQGSATCVNTPGERSFLCKCPPGYSGTICE), and 110–146 (TIGSCGKNSCQHGGICHQDPIYPVCICPAGYAGRFCE). 20 cysteine pairs are disulfide-bonded: Cys-34-Cys-45, Cys-39-Cys-54, Cys-56-Cys-67, Cys-74-Cys-85, Cys-79-Cys-96, Cys-98-Cys-107, Cys-114-Cys-125, Cys-119-Cys-134, Cys-136-Cys-145, Cys-152-Cys-163, Cys-157-Cys-172, Cys-174-Cys-183, Cys-190-Cys-201, Cys-195-Cys-210, Cys-212-Cys-221, Cys-228-Cys-239, Cys-233-Cys-248, Cys-250-Cys-259, Cys-266-Cys-277, and Cys-271-Cys-286. The EGF-like 4; calcium-binding domain maps to 148 to 184 (DHDECASSPCQNGAVCQDGIDGYSCFCVPGYQGRHCD). The 37-residue stretch at 186–222 (EVDECASDPCKNEATCLNEIGRYTCICPHNYSGVNCE) folds into the EGF-like 5; calcium-binding domain. Asn-215 carries N-linked (GlcNAc...) asparagine glycosylation. Residues 224–260 (EIDECWSQPCLNGATCQDALGAYFCDCAPGFLGDHCE) enclose the EGF-like 6; calcium-binding domain. The region spanning 262–299 (NTDECASQPCLHGGLCVDGENRYSCNCTGSGFTGTHCE) is the EGF-like 7; calcium-binding domain. An N-linked (GlcNAc...) asparagine glycan is attached at Asn-287. 13 cysteine pairs are disulfide-bonded: Cys-288–Cys-298, Cys-305–Cys-316, Cys-310–Cys-325, Cys-327–Cys-336, Cys-343–Cys-354, Cys-348–Cys-383, Cys-385–Cys-394, Cys-401–Cys-412, Cys-406–Cys-421, Cys-423–Cys-438, Cys-445–Cys-456, Cys-450–Cys-469, and Cys-471–Cys-480. EGF-like domains are found at residues 301–337 (LMPLCWSKPCHNNATCEDSVDNYTCHCWPGYTGAQCE) and 339–395 (DLNE…IHCE). 2 N-linked (GlcNAc...) asparagine glycosylation sites follow: Asn-313 and Asn-322. An EGF-like 10; calcium-binding domain is found at 397 to 439 (DVNECSSNPCQNGGTCENLPGNYTCHCPFDNLSRTFYGGRDCS). N-linked (GlcNAc...) asparagine glycosylation is found at Asn-418, Asn-427, and Asn-453. The 41-residue stretch at 441–481 (ILLGCTHQQCLNNGTCIPHFQDGQHGFSCLCPSGYTGSLCE) folds into the EGF-like 11 domain. One can recognise a Laminin G-like 1 domain in the interval 485 to 670 (TLSFEGDGFL…GSSLNVKAGC (186 aa)). Residues Asn-550, Asn-561, and Asn-657 are each glycosylated (N-linked (GlcNAc...) asparagine). Cystine bridges form between Cys-642/Cys-670, Cys-676/Cys-687, Cys-681/Cys-696, and Cys-698/Cys-707. Residues 672–708 (RKDWCESQPCQSRGRCINLWLSYQCDCHRPYEGPNCL) enclose the EGF-like 12 domain. In terms of domain architecture, Laminin G-like 2 spans 714-885 (GRFGQDDSTG…PVLVNVTQGC (172 aa)). 3 N-linked (GlcNAc...) asparagine glycosylation sites follow: Asn-757, Asn-871, and Asn-880. 6 disulfides stabilise this stretch: Cys-851–Cys-885, Cys-891–Cys-902, Cys-896–Cys-911, Cys-913–Cys-922, Cys-928–Cys-939, and Cys-933–Cys-948. 2 EGF-like domains span residues 887 to 923 (GDNSCKSNPCHNGGVCHSRWDDFSCSCPALTSGKACE) and 924 to 960 (EVQWCGFSPCPHGAQCQPVLQGFECIANAVFNGQSGQ). The 188-residue stretch at 950–1137 (ANAVFNGQSG…ISTNSVVTGC (188 aa)) folds into the Laminin G-like 3 domain. N-linked (GlcNAc...) asparagine glycans are attached at residues Asn-968, Asn-975, and Asn-1000. Intrachain disulfides connect Cys-1096–Cys-1137, Cys-1143–Cys-1154, Cys-1148–Cys-1163, Cys-1165–Cys-1174, Cys-1181–Cys-1191, Cys-1186–Cys-1200, Cys-1202–Cys-1211, Cys-1218–Cys-1229, Cys-1223–Cys-1238, Cys-1240–Cys-1249, Cys-1259–Cys-1274, Cys-1268–Cys-1283, Cys-1285–Cys-1294, Cys-1301–Cys-1312, Cys-1306–Cys-1321, and Cys-1323–Cys-1332. Residues 1139–1175 (QLNVCNSNPCLHGGNCEDIYSSYHCSCPLGWSGKHCE) enclose the EGF-like 15 domain. The EGF-like 16; calcium-binding domain maps to 1177–1212 (NIDECFSNPCIHGNCSDRVAAYHCTCEPGYTGVNCE). Asn-1190 carries an N-linked (GlcNAc...) asparagine glycan. EGF-like domains lie at 1214–1250 (DIDNCQSHQCANGATCISHTNGYSCLCFGNFTGKFCR) and 1255–1295 (PSTV…EWCE). 3 N-linked (GlcNAc...) asparagine glycosylation sites follow: Asn-1243, Asn-1265, and Asn-1273. Residues 1297–1333 (DIDECASDPCVNGGLCQDLLNKFQCLCDVAFAGERCE) enclose the EGF-like 19; calcium-binding domain. A helical membrane pass occupies residues 1348–1368 (IGSVTVALLLILLLAIVASVV). At 1369-1406 (TSNKRATQGTYSPSRQEKEGSRVEMWNLMPPPAMERLI) the chain is on the cytoplasmic side. An interaction with EPB41L5 region spans residues 1370 to 1406 (SNKRATQGTYSPSRQEKEGSRVEMWNLMPPPAMERLI).

The protein belongs to the Crumbs protein family. As to quaternary structure, component of a complex composed of PALS1, CRB1 and EPB41L5. Within the complex, interacts (via intracellular domain) with PALS1 and EPB41L5 (via FERM domain). Forms a complex with MPP4 and PALS1. Interacts with MPDZ/MUPP1 and MPP4. In terms of processing, extensively glycosylated. Preferential expression in retina, also expressed in brain, testis, fetal brain and fetal eye. Expressed at the outer limiting membrane and apical to adherens junctions in the retina.

It localises to the apical cell membrane. The protein resides in the secreted. Its subcellular location is the cell projection. It is found in the cilium. The protein localises to the photoreceptor outer segment. It localises to the photoreceptor inner segment. Its function is as follows. Plays a role in photoreceptor morphogenesis in the retina. May maintain cell polarization and adhesion. In Homo sapiens (Human), this protein is Protein crumbs homolog 1.